The following is a 276-amino-acid chain: uncharacterized protein (276 aa).

Residues 20–137 (PVLIFIPGAN…PPINTFLPDS (118 aa)) enclose the AB hydrolase-1 domain. The tract at residues 57 to 76 (GESELTEPLPDSASNPDSDY) is disordered.

It belongs to the AB hydrolase superfamily.

This is an uncharacterized protein from Staphylococcus aureus (strain MW2).